A 385-amino-acid polypeptide reads, in one-letter code: Flap endonuclease 1 (385 aa).

Residues 1 to 105 (MGIKGLNAII…HELSKRSARR (105 aa)) are N-domain. Aspartate 34 lines the Mg(2+) pocket. DNA is bound by residues arginine 47 and arginine 71. Residues aspartate 87, glutamate 156, glutamate 158, aspartate 177, and aspartate 179 each coordinate Mg(2+). An I-domain region spans residues 120 to 251 (EKLKHERRLV…VTALKLIKEH (132 aa)). DNA is bound at residue glutamate 156. DNA is bound by residues glycine 229 and aspartate 231. Mg(2+) is bound at residue aspartate 231. Residues 338–346 (VQGRLDGFF) are interaction with PCNA. Low complexity predominate over residues 356–370 (LAAANAKAKSTKAGK). A disordered region spans residues 356-385 (LAAANAKAKSTKAGKQATKGKVGKPGRPRK). The span at 376 to 385 (KVGKPGRPRK) shows a compositional bias: basic residues.

Belongs to the XPG/RAD2 endonuclease family. FEN1 subfamily. Interacts with PCNA. Three molecules of FEN1 bind to one PCNA trimer with each molecule binding to one PCNA monomer. PCNA stimulates the nuclease activity without altering cleavage specificity. The cofactor is Mg(2+). Post-translationally, phosphorylated. Phosphorylation upon DNA damage induces relocalization to the nuclear plasma.

It is found in the nucleus. It localises to the nucleolus. The protein resides in the nucleoplasm. Its subcellular location is the mitochondrion. Structure-specific nuclease with 5'-flap endonuclease and 5'-3' exonuclease activities involved in DNA replication and repair. During DNA replication, cleaves the 5'-overhanging flap structure that is generated by displacement synthesis when DNA polymerase encounters the 5'-end of a downstream Okazaki fragment. It enters the flap from the 5'-end and then tracks to cleave the flap base, leaving a nick for ligation. Also involved in the long patch base excision repair (LP-BER) pathway, by cleaving within the apurinic/apyrimidinic (AP) site-terminated flap. Acts as a genome stabilization factor that prevents flaps from equilibrating into structures that lead to duplications and deletions. Also possesses 5'-3' exonuclease activity on nicked or gapped double-stranded DNA, and exhibits RNase H activity. Also involved in replication and repair of rDNA and in repairing mitochondrial DNA. This is Flap endonuclease 1 from Lachancea thermotolerans (strain ATCC 56472 / CBS 6340 / NRRL Y-8284) (Yeast).